A 794-amino-acid chain; its full sequence is Ent-kaurene synthase 1, chloroplastic (794 aa).

The N-terminal 28 residues, 1 to 28 (MSLLLSNSVLVGPKFRSSRISHASASLD), are a transit peptide targeting the chloroplast. Residues Asp-543, Asp-547, Asn-687, and Glu-695 each coordinate Mg(2+). A DDXXD motif motif is present at residues 543–547 (DDFFD).

Belongs to the terpene synthase family. Requires Mg(2+) as cofactor. Accumulates in leaves, and, at low levels, in germinating seeds.

It localises to the plastid. The protein resides in the chloroplast. The catalysed reaction is ent-copalyl diphosphate = ent-kaur-16-ene + diphosphate. It functions in the pathway secondary metabolite biosynthesis; terpenoid biosynthesis. Its pathway is plant hormone biosynthesis; gibberellin biosynthesis. Involved in the biosynthesis of ent-kaurene diterpenoids natural products such as oridonin, miltiradiene, eriocalyxin B and nezukol, known to exhibit antitumor, anti-inflammatory and antibacterial activities, and in the production of gibberellins phytohormones. Catalyzes the conversion of ent-copalyl diphosphate (ent-CPP) to ent-kaurene. The chain is Ent-kaurene synthase 1, chloroplastic from Isodon eriocalyx (Plectranthus eriocalyx).